The sequence spans 133 residues: Egg protein CP422 (133 aa).

Residues 1 to 21 (MHECMIVFFIFAVVSIYYADA) form the signal peptide. Disulfide bonds link C107–C121, C114–C125, and C120–C130.

It is found in the secreted. This is Egg protein CP422 (CP422) from Schistosoma japonicum (Blood fluke).